The chain runs to 376 residues: Cobalt-precorrin-5B C(1)-methyltransferase (376 aa).

Positions 353-376 (KGRTTSTPSHQPAPSSFGDRNRRT) are disordered. Residues 355 to 366 (RTTSTPSHQPAP) show a composition bias toward polar residues.

It belongs to the CbiD family.

The enzyme catalyses Co-precorrin-5B + S-adenosyl-L-methionine = Co-precorrin-6A + S-adenosyl-L-homocysteine. It participates in cofactor biosynthesis; adenosylcobalamin biosynthesis; cob(II)yrinate a,c-diamide from sirohydrochlorin (anaerobic route): step 6/10. Its function is as follows. Catalyzes the methylation of C-1 in cobalt-precorrin-5B to form cobalt-precorrin-6A. In Agrobacterium fabrum (strain C58 / ATCC 33970) (Agrobacterium tumefaciens (strain C58)), this protein is Cobalt-precorrin-5B C(1)-methyltransferase.